Consider the following 53-residue polypeptide: Large ribosomal subunit protein bL32 (53 aa).

The segment covering 1 to 20 has biased composition (basic residues); the sequence is MAVPKRRVSHTRAAKRRTHY. The interval 1-53 is disordered; it reads MAVPKRRVSHTRAAKRRTHYKLTLPMPVKDADGTWRMPHHMNMTTGEYKTTKA. A compositionally biased stretch (polar residues) spans 42–53; the sequence is NMTTGEYKTTKA.

It belongs to the bacterial ribosomal protein bL32 family.

This Sulfurovum sp. (strain NBC37-1) protein is Large ribosomal subunit protein bL32.